Here is a 270-residue protein sequence, read N- to C-terminus: uncharacterized protein (270 aa).

Positions 43–112 constitute a J domain; it reads CTANDIKRKY…REEYDRFGIH (70 aa). The segment at 239 to 270 is disordered; sequence EQSKQIPTQQKPSSLPPPERALPAPTMPTPSS. Polar residues predominate over residues 242–251; the sequence is KQIPTQQKPS. Residues 252–270 show a composition bias toward pro residues; the sequence is SLPPPERALPAPTMPTPSS.

This is an uncharacterized protein from Schizosaccharomyces pombe (strain 972 / ATCC 24843) (Fission yeast).